A 757-amino-acid polypeptide reads, in one-letter code: Probable tRNA (uracil-O(2)-)-methyltransferase (757 aa).

Disordered stretches follow at residues 55–93 (EARG…GPEQ) and 108–138 (QQEE…GDFP). Positions 72 to 84 (PGPGQGSPGGGPG) are enriched in gly residues. Residue serine 78 is modified to Phosphoserine. Residues 123–136 (DSGHPGHAEGREGD) show a composition bias toward basic and acidic residues. Serine 533 is modified (phosphoserine). Residues 713 to 743 (ACKTRLCWFFMHHPDGCALSTDCCPFAHGPA) form a C3H1-type zinc finger.

The protein belongs to the TRM44 family.

The protein localises to the cytoplasm. The catalysed reaction is uridine(44) in tRNA(Ser) + S-adenosyl-L-methionine = 2'-O-methyluridine(44) in tRNA(Ser) + S-adenosyl-L-homocysteine + H(+). In terms of biological role, probable adenosyl-L-methionine (AdoMet)-dependent tRNA (uracil-O(2)-)-methyltransferase. The sequence is that of Probable tRNA (uracil-O(2)-)-methyltransferase (TRMT44) from Homo sapiens (Human).